An 83-amino-acid polypeptide reads, in one-letter code: Small ribosomal subunit protein eS21 (83 aa).

It belongs to the eukaryotic ribosomal protein eS21 family. Component of the 40S small ribosomal subunit.

It is found in the cytoplasm. Its subcellular location is the cytosol. It localises to the rough endoplasmic reticulum. Functionally, component of the small ribosomal subunit. The ribosome is a large ribonucleoprotein complex responsible for the synthesis of proteins in the cell. This is Small ribosomal subunit protein eS21 (rps21) from Ictalurus punctatus (Channel catfish).